We begin with the raw amino-acid sequence, 443 residues long: Trigger factor (443 aa).

The PPIase FKBP-type domain maps to 163–249 (KDAAIIDYQA…LKSLKEEILP (87 aa)).

The protein belongs to the FKBP-type PPIase family. Tig subfamily.

The protein localises to the cytoplasm. It catalyses the reaction [protein]-peptidylproline (omega=180) = [protein]-peptidylproline (omega=0). Its function is as follows. Involved in protein export. Acts as a chaperone by maintaining the newly synthesized protein in an open conformation. Functions as a peptidyl-prolyl cis-trans isomerase. The protein is Trigger factor of Desulfosudis oleivorans (strain DSM 6200 / JCM 39069 / Hxd3) (Desulfococcus oleovorans).